A 96-amino-acid chain; its full sequence is MNIRPLHDRVIVERQEVESKSAGGIVLTGSAAEKSTRGKVLAVGKGRILENGSVQPLDVKVGDTVIFAESYGTKTEKIDGKEVLILAEHDILAIVE.

This sequence belongs to the GroES chaperonin family. As to quaternary structure, heptamer of 7 subunits arranged in a ring. Interacts with the chaperonin GroEL.

The protein localises to the cytoplasm. In terms of biological role, together with the chaperonin GroEL, plays an essential role in assisting protein folding. The GroEL-GroES system forms a nano-cage that allows encapsulation of the non-native substrate proteins and provides a physical environment optimized to promote and accelerate protein folding. GroES binds to the apical surface of the GroEL ring, thereby capping the opening of the GroEL channel. This chain is Co-chaperonin GroES 1, found in Vibrio cholerae serotype O1 (strain ATCC 39315 / El Tor Inaba N16961).